A 799-amino-acid polypeptide reads, in one-letter code: Signal transducer and activator of transcription 5A (799 aa).

Residue Tyr-90 is modified to Phosphotyrosine. Position 128 is a phosphoserine (Ser-128). The 98-residue stretch at 589-686 (WNDGAILGFV…EVFSKYYTPV (98 aa)) folds into the SH2 domain. Tyr-682 carries the post-translational modification Phosphotyrosine. Tyr-699 is subject to Phosphotyrosine; by JAK2. Residues 778 to 799 (DSLDPRLSPPAGLFASTRGSLS) form a disordered region. Position 785 is a phosphoserine (Ser-785).

Belongs to the transcription factor STAT family. Forms a homodimer or a heterodimer with a related family member. Binds NR3C1. Interacts with NCOA1 and SOCS7. Interacts with ERBB4. Interacts with EBF4. Interacts with CD69. In terms of processing, ISGylated. Post-translationally, tyrosine phosphorylated in response to KITLG/SCF, IL2, IL3, IL7, IL15, CSF2/GMCSF, GH1, PRL, EPO and THPO. Activated KIT promotes phosphorylation on tyrosine residues and subsequent translocation to the nucleus. Tyrosine phosphorylated in response to constitutively activated FGFR1, FGFR2, FGFR3 and FGFR4. Tyrosine phosphorylation is required for DNA-binding activity and dimerization. Serine phosphorylation is also required for maximal transcriptional activity. Tyrosine phosphorylated in response to signaling via activated FLT3; wild-type FLT3 results in much weaker phosphorylation than constitutively activated mutant FLT3. Alternatively, can be phosphorylated by JAK2 at Tyr-699.

It localises to the cytoplasm. The protein resides in the nucleus. Functionally, carries out a dual function: signal transduction and activation of transcription. Mediates cellular responses to the cytokine KITLG/SCF and other growth factors. May mediate cellular responses to activated FGFR1, FGFR2, FGFR3 and FGFR4. Binds to the GAS element and activates PRL-induced transcription. Regulates the expression of milk proteins during lactation. This Sus scrofa (Pig) protein is Signal transducer and activator of transcription 5A (STAT5A).